Consider the following 300-residue polypeptide: UDP-N-acetylenolpyruvoylglucosamine reductase (300 aa).

Residues 28–193 (KTGGPADVLA…LQATFALEKG (166 aa)) form the FAD-binding PCMH-type domain. Arg-172 is an active-site residue. The Proton donor role is filled by Ser-222. Glu-292 is a catalytic residue.

This sequence belongs to the MurB family. It depends on FAD as a cofactor.

Its subcellular location is the cytoplasm. The enzyme catalyses UDP-N-acetyl-alpha-D-muramate + NADP(+) = UDP-N-acetyl-3-O-(1-carboxyvinyl)-alpha-D-glucosamine + NADPH + H(+). The protein operates within cell wall biogenesis; peptidoglycan biosynthesis. In terms of biological role, cell wall formation. This is UDP-N-acetylenolpyruvoylglucosamine reductase from Enterococcus faecalis (strain ATCC 700802 / V583).